A 928-amino-acid polypeptide reads, in one-letter code: Dual serine/threonine and tyrosine protein kinase (928 aa).

Residues 1-14 are compositionally biased toward low complexity; sequence MEGDGVPWGSEPES. Disordered stretches follow at residues 1-22 and 55-81; these read MEGD…GGGG and LRGS…AGDV. A coiled-coil region spans residues 394–430; that stretch reads RKKENELYESLMNIANRKQEEMKDMIVETLNTMKEEL. Residues 651 to 905 form the Protein kinase domain; the sequence is PKLGQELGRG…PLLGIVQPML (255 aa). Residues 657-665 and Lys-680 contribute to the ATP site; that span reads LGRGQYGVV. The Proton acceptor role is filled by Asp-776.

It belongs to the protein kinase superfamily. Ser/Thr protein kinase family.

It localises to the cytoplasm. The protein localises to the cell membrane. It is found in the apical cell membrane. Its subcellular location is the basolateral cell membrane. The protein resides in the cell junction. It catalyses the reaction L-seryl-[protein] + ATP = O-phospho-L-seryl-[protein] + ADP + H(+). It carries out the reaction L-threonyl-[protein] + ATP = O-phospho-L-threonyl-[protein] + ADP + H(+). The catalysed reaction is L-tyrosyl-[protein] + ATP = O-phospho-L-tyrosyl-[protein] + ADP + H(+). Functionally, acts as a positive regulator of ERK phosphorylation downstream of fibroblast growth factor-receptor activation. Involved in the regulation of both caspase-dependent apoptosis and caspase-independent cell death. In the skin, it plays a predominant role in suppressing caspase-dependent apoptosis in response to UV stress in a range of dermal cell types. The protein is Dual serine/threonine and tyrosine protein kinase (DSTYK) of Bos taurus (Bovine).